The chain runs to 172 residues: Envelope protein UL45 (172 aa).

The Intravirion portion of the chain corresponds to 1 to 27 (MPLRASEHAYRPLGPGTPPMRARLPAA). A helical; Signal-anchor for type II membrane protein transmembrane segment spans residues 28-48 (AWVGVGTIIGGVVIIAALVLV). The Virion surface portion of the chain corresponds to 49 to 172 (PSRASWALSP…TSTRNALGLP (124 aa)).

It belongs to the herpesviridae HHV-1 UL45 family.

The protein resides in the virion membrane. Its function is as follows. Important virulence factor of HSV neurotropism. Seems to be required for glycoprotein B-induced fusion. Dispensable for growth in vitro. In Human herpesvirus 1 (strain 17) (HHV-1), this protein is Envelope protein UL45.